The sequence spans 493 residues: Glutamyl-tRNA(Gln) amidotransferase subunit A (493 aa).

Catalysis depends on charge relay system residues Lys79 and Ser159. Catalysis depends on Ser183, which acts as the Acyl-ester intermediate.

The protein belongs to the amidase family. GatA subfamily. As to quaternary structure, heterotrimer of A, B and C subunits.

The catalysed reaction is L-glutamyl-tRNA(Gln) + L-glutamine + ATP + H2O = L-glutaminyl-tRNA(Gln) + L-glutamate + ADP + phosphate + H(+). Allows the formation of correctly charged Gln-tRNA(Gln) through the transamidation of misacylated Glu-tRNA(Gln) in organisms which lack glutaminyl-tRNA synthetase. The reaction takes place in the presence of glutamine and ATP through an activated gamma-phospho-Glu-tRNA(Gln). The sequence is that of Glutamyl-tRNA(Gln) amidotransferase subunit A from Brucella anthropi (strain ATCC 49188 / DSM 6882 / CCUG 24695 / JCM 21032 / LMG 3331 / NBRC 15819 / NCTC 12168 / Alc 37) (Ochrobactrum anthropi).